A 111-amino-acid chain; its full sequence is MGMPNLGDMMKQIQKAGEKMQDVQNQLEKLVAHGESGGGMVKVSVSGKQKLLSLRIDPEIMDDAEMVQDLVIAAVNNALDASAALAQEEISKAAGGMINPADILKNMNLGK.

Belongs to the YbaB/EbfC family. Homodimer.

It is found in the cytoplasm. The protein localises to the nucleoid. Its function is as follows. Binds to DNA and alters its conformation. May be involved in regulation of gene expression, nucleoid organization and DNA protection. This chain is Nucleoid-associated protein Clim_0875, found in Chlorobium limicola (strain DSM 245 / NBRC 103803 / 6330).